The sequence spans 72 residues: Small ribosomal subunit protein bS18 (72 aa).

The protein belongs to the bacterial ribosomal protein bS18 family. In terms of assembly, part of the 30S ribosomal subunit. Forms a tight heterodimer with protein bS6.

Binds as a heterodimer with protein bS6 to the central domain of the 16S rRNA, where it helps stabilize the platform of the 30S subunit. The polypeptide is Small ribosomal subunit protein bS18 (Fusobacterium nucleatum subsp. nucleatum (strain ATCC 25586 / DSM 15643 / BCRC 10681 / CIP 101130 / JCM 8532 / KCTC 2640 / LMG 13131 / VPI 4355)).